A 65-amino-acid chain; its full sequence is Large ribosomal subunit protein bL35 (65 aa).

Positions M1–G20 are disordered.

Belongs to the bacterial ribosomal protein bL35 family.

The polypeptide is Large ribosomal subunit protein bL35 (Bacteroides thetaiotaomicron (strain ATCC 29148 / DSM 2079 / JCM 5827 / CCUG 10774 / NCTC 10582 / VPI-5482 / E50)).